The sequence spans 469 residues: MSLPIAGLAQLSKGIIQVVGKDATKFLNGLITSRMLPNVVKKKQHTISENENRHANLSEIIDINNNWGLMHGDIYDPEENIFIGRDGLNSMFLNSKGRVTADCFLYSFPFHNSKGSFEEVLKKPNFLIEVDSRIIPEMESLLRIHKLSAKVKINTVSDIYSYYYYSDTMEFDELLEQVQDTYFRSVDPNEALVKANEFIESNLIFNSRVSSNIVGFSIDNRIPNLGIKILTNKPLNNDDQNIGVAVDDFFSESFQQSFRTNIISEDVINMRRNVNGLFEGQDADIDQTLLPFECNLDYTNGLSLDKGCYVGQELTIRTYNNGVIRKRIMPVQFFENNEETVDEISNQGYVNIDSSDKVVETLKMLNQTTLGKLDMLPLYDLPVENEESKSASPFASSPFGGESKKSRRRKASSGKIISQHDNVGFALVTLSEIERNDLFKIEVPSLEGGMRSVGIKVFTPDWWPEQEDY.

Residues Met1–Lys43 constitute a mitochondrion transit peptide. The segment at Glu387–Lys415 is disordered. A compositionally biased stretch (low complexity) spans Ser390–Gly401.

It belongs to the GcvT family. CAF17/IBA57 subfamily.

The protein resides in the mitochondrion matrix. The polypeptide is Iron-sulfur cluster assembly factor IBA57 homolog, mitochondrial (CAF17) (Scheffersomyces stipitis (strain ATCC 58785 / CBS 6054 / NBRC 10063 / NRRL Y-11545) (Yeast)).